We begin with the raw amino-acid sequence, 103 residues long: Large ribosomal subunit protein bL21 (103 aa).

This sequence belongs to the bacterial ribosomal protein bL21 family. As to quaternary structure, part of the 50S ribosomal subunit. Contacts protein L20.

Functionally, this protein binds to 23S rRNA in the presence of protein L20. This chain is Large ribosomal subunit protein bL21, found in Clostridium kluyveri (strain NBRC 12016).